The chain runs to 486 residues: N-succinylglutamate 5-semialdehyde dehydrogenase (486 aa).

220-225 (GSSRTG) is a binding site for NAD(+). Residues glutamate 243 and cysteine 277 contribute to the active site.

Belongs to the aldehyde dehydrogenase family. AstD subfamily.

It carries out the reaction N-succinyl-L-glutamate 5-semialdehyde + NAD(+) + H2O = N-succinyl-L-glutamate + NADH + 2 H(+). It participates in amino-acid degradation; L-arginine degradation via AST pathway; L-glutamate and succinate from L-arginine: step 4/5. In terms of biological role, catalyzes the NAD-dependent reduction of succinylglutamate semialdehyde into succinylglutamate. The sequence is that of N-succinylglutamate 5-semialdehyde dehydrogenase from Shewanella sp. (strain W3-18-1).